Consider the following 148-residue polypeptide: Ribosomal RNA large subunit methyltransferase H 2 (148 aa).

S-adenosyl-L-methionine is bound by residues Leu-74, Gly-106, and 125 to 130 (FSKMTF).

It belongs to the RNA methyltransferase RlmH family. Homodimer.

It is found in the cytoplasm. The catalysed reaction is pseudouridine(1915) in 23S rRNA + S-adenosyl-L-methionine = N(3)-methylpseudouridine(1915) in 23S rRNA + S-adenosyl-L-homocysteine + H(+). In terms of biological role, specifically methylates the pseudouridine at position 1915 (m3Psi1915) in 23S rRNA. This Caldanaerobacter subterraneus subsp. tengcongensis (strain DSM 15242 / JCM 11007 / NBRC 100824 / MB4) (Thermoanaerobacter tengcongensis) protein is Ribosomal RNA large subunit methyltransferase H 2.